The chain runs to 108 residues: ATP synthase peripheral stalk subunit F6, mitochondrial (108 aa).

The N-terminal 32 residues, 1–32 (MILQRLFRLSSAVQSAISVSWRRNIGITAVAF), are a transit peptide targeting the mitochondrion. N6-acetyllysine occurs at positions 41, 46, and 79. K84 and K99 each carry N6-acetyllysine; alternate. N6-succinyllysine; alternate is present on residues K84 and K99. N6-acetyllysine is present on K105. A Phosphoserine modification is found at S108.

The protein belongs to the eukaryotic ATPase subunit F6 family. In terms of assembly, component of the ATP synthase complex composed at least of ATP5F1A/subunit alpha, ATP5F1B/subunit beta, ATP5MC1/subunit c (homooctomer), MT-ATP6/subunit a, MT-ATP8/subunit 8, ATP5ME/subunit e, ATP5MF/subunit f, ATP5MG/subunit g, ATP5MK/subunit k, ATP5MJ/subunit j, ATP5F1C/subunit gamma, ATP5F1D/subunit delta, ATP5F1E/subunit epsilon, ATP5PF/subunit F6, ATP5PB/subunit b, ATP5PD/subunit d, ATP5PO/subunit OSCP. ATP synthase complex consists of a soluble F(1) head domain (subunits alpha(3) and beta(3)) - the catalytic core - and a membrane F(0) domain - the membrane proton channel (subunits c, a, 8, e, f, g, k and j). These two domains are linked by a central stalk (subunits gamma, delta, and epsilon) rotating inside the F1 region and a stationary peripheral stalk (subunits F6, b, d, and OSCP).

The protein resides in the mitochondrion. It localises to the mitochondrion inner membrane. Functionally, subunit F6, of the mitochondrial membrane ATP synthase complex (F(1)F(0) ATP synthase or Complex V) that produces ATP from ADP in the presence of a proton gradient across the membrane which is generated by electron transport complexes of the respiratory chain. ATP synthase complex consist of a soluble F(1) head domain - the catalytic core - and a membrane F(1) domain - the membrane proton channel. These two domains are linked by a central stalk rotating inside the F(1) region and a stationary peripheral stalk. During catalysis, ATP synthesis in the catalytic domain of F(1) is coupled via a rotary mechanism of the central stalk subunits to proton translocation. In vivo, can only synthesize ATP although its ATP hydrolase activity can be activated artificially in vitro. Part of the complex F(0) domain. Part of the complex F(0) domain and the peripheric stalk, which acts as a stator to hold the catalytic alpha(3)beta(3) subcomplex and subunit a/ATP6 static relative to the rotary elements. This is ATP synthase peripheral stalk subunit F6, mitochondrial from Bos taurus (Bovine).